A 396-amino-acid polypeptide reads, in one-letter code: Cathepsin D (396 aa).

Positions 1-18 are cleaved as a signal peptide; it reads MKFLYLFLFAVFAWTSDA. Residues 19–61 constitute a propeptide, activation peptide; the sequence is IVRIPLKKFRSIRRTLSDSGLNVEQLLAGTNSLQHNQGFPSSN. In terms of domain architecture, Peptidase A1 spans 76 to 393; the sequence is YYGEIGLGTP…DRESNRVGFA (318 aa). The active site involves Asp-94. Cys-107 and Cys-114 are joined by a disulfide. Asn-131 carries an N-linked (GlcNAc...) asparagine glycan. The cysteines at positions 272 and 276 are disulfide-linked. Residue Asp-281 is part of the active site. The cysteines at positions 315 and 352 are disulfide-linked.

The protein belongs to the peptidase A1 family. As to quaternary structure, monomer.

The protein resides in the lysosome. It catalyses the reaction Specificity similar to, but narrower than, that of pepsin A. Does not cleave the 4-Gln-|-His-5 bond in B chain of insulin.. Inhibited by pepstatin. Acid protease active in intracellular protein breakdown. This chain is Cathepsin D (ctsd), found in Clupea harengus (Atlantic herring).